The chain runs to 383 residues: tRNA(Met) cytidine acetate ligase (383 aa).

ATP is bound by residues 7 to 20, Gly101, Asn150, and Arg175; that span reads ITEY…HRYH.

This sequence belongs to the TmcAL family.

The protein resides in the cytoplasm. It carries out the reaction cytidine(34) in elongator tRNA(Met) + acetate + ATP = N(4)-acetylcytidine(34) in elongator tRNA(Met) + AMP + diphosphate. In terms of biological role, catalyzes the formation of N(4)-acetylcytidine (ac(4)C) at the wobble position of elongator tRNA(Met), using acetate and ATP as substrates. First activates an acetate ion to form acetyladenylate (Ac-AMP) and then transfers the acetyl group to tRNA to form ac(4)C34. This Lactiplantibacillus plantarum (strain ATCC BAA-793 / NCIMB 8826 / WCFS1) (Lactobacillus plantarum) protein is tRNA(Met) cytidine acetate ligase.